Reading from the N-terminus, the 2214-residue chain is Multifunctional protein URA2 (2214 aa).

Ala2 bears the N-acetylalanine mark. The segment at 2-400 (ATIAPTAPIT…PGPRDTEFLF (399 aa)) is GATase (Glutamine amidotransferase). L-glutamine is bound by residues Ser64, Gly273, and Gly275. Residues 228 to 413 (RILAIDVGMK…IQAVKEFKYT (186 aa)) enclose the Glutamine amidotransferase type-1 domain. Cys302 acts as the Nucleophile; for GATase activity in catalysis. Residues Leu303, Gln306, Asn344, Gly346, and Phe347 each coordinate L-glutamine. Active-site for GATase activity residues include His386 and Glu388. A linker region spans residues 401 to 440 (DVFIQAVKEFKYTQVLKPIAFPGGLLEDNVKAHPRIEAKK). Positions 440–980 (KVLVLGSGGL…DSHDLSFDDH (541 aa)) are CPSase A. Residues 440–1482 (KVLVLGSGGL…TNVKCAKLLI (1043 aa)) are CPSase (Carbamoyl phosphate synthase). Residues Arg558, Arg598, Gly604, Gly605, Lys635, Met637, Glu642, Gly668, Ile669, His670, Gln711, and Glu725 each contribute to the ATP site. ATP-grasp domains are found at residues 562 to 754 (SNAI…KLGL) and 1099 to 1290 (SRML…KAIM). Mg(2+) is bound by residues Gln711, Glu725, and Asn727. Mn(2+) contacts are provided by Gln711, Glu725, and Asn727. Residues 981–1482 (GVMVLGSGVY…TNVKCAKLLI (502 aa)) form a CPSase B region. Residues Arg1135, Lys1174, Ile1176, Glu1181, Gly1206, Val1207, His1208, Ser1209, Gln1249, and Glu1261 each coordinate ATP. Residues Gln1249, Glu1261, and Asn1263 each coordinate Mg(2+). Positions 1249, 1261, and 1263 each coordinate Mn(2+). One can recognise an MGS-like domain in the interval 1356 to 1508 (FKLPKKNILL…QTSHRTITLP (153 aa)). Residues 1483–1492 (EAISRNITLD) are linker. Positions 1493 to 1821 (VSERDAQTSH…YNGETLVLSG (329 aa)) are defective DHOase domain. Residues 1822–1909 (ELVSPGAKGK…NLIRSNNPFR (88 aa)) form a linker region. Lys1853 participates in a covalent cross-link: Glycyl lysine isopeptide (Lys-Gly) (interchain with G-Cter in ubiquitin). Ser1857 bears the Phosphoserine; by PKA mark. The tract at residues 1910-2214 (GRHILSIKQF…LLAMVMGVDM (305 aa)) is ATCase (Aspartate transcarbamylase). Positions 1962 and 1963 each coordinate carbamoyl phosphate. Position 1990 (Lys1990) interacts with L-aspartate. Residues Arg2011, His2039, and Gln2042 each contribute to the carbamoyl phosphate site. Residues Arg2072 and Arg2134 each contribute to the L-aspartate site. Positions 2173 and 2174 each coordinate carbamoyl phosphate.

In the N-terminal section; belongs to the CarA family. This sequence in the 2nd section; belongs to the CarB family. It in the 3rd section; belongs to the metallo-dependent hydrolases superfamily. DHOase family. CAD subfamily. The protein in the C-terminal section; belongs to the aspartate/ornithine carbamoyltransferase superfamily. ATCase family. The cofactor is Mg(2+). Mn(2+) serves as cofactor.

It is found in the cytoplasm. It carries out the reaction hydrogencarbonate + L-glutamine + 2 ATP + H2O = carbamoyl phosphate + L-glutamate + 2 ADP + phosphate + 2 H(+). The catalysed reaction is L-glutamine + H2O = L-glutamate + NH4(+). It catalyses the reaction hydrogencarbonate + NH4(+) + 2 ATP = carbamoyl phosphate + 2 ADP + phosphate + 2 H(+). The enzyme catalyses carbamoyl phosphate + L-aspartate = N-carbamoyl-L-aspartate + phosphate + H(+). Its pathway is pyrimidine metabolism; UMP biosynthesis via de novo pathway; (S)-dihydroorotate from bicarbonate: step 1/3. The protein operates within pyrimidine metabolism; UMP biosynthesis via de novo pathway; (S)-dihydroorotate from bicarbonate: step 2/3. Its activity is regulated as follows. Both CPSase and ATCase activities are feedback inhibited by the end product UTP. Multifunctional protein that encodes the first 2 enzymatic activities of the de novo pyrimidine pathway: carbamoylphosphate synthetase (CPSase; EC 6.3.5.5) and aspartate transcarbamylase (ATCase; EC 2.1.3.2). The CPSase-function is accomplished in 2 steps, by a glutamine-dependent amidotransferase activity (GATase) that binds and cleaves glutamine to produce ammonia, followed by an ammonium-dependent carbamoyl phosphate synthetase, which reacts with the ammonia, hydrogencarbonate and ATP to form carbamoyl phosphate. The endogenously produced carbamoyl phosphate is sequestered and channeled to the ATCase active site. ATCase then catalyzes the formation of carbamoyl-L-aspartate from L-aspartate and carbamoyl phosphate. This chain is Multifunctional protein URA2 (URA2), found in Saccharomyces cerevisiae (strain ATCC 204508 / S288c) (Baker's yeast).